The sequence spans 115 residues: T cell receptor beta variable 2 (115 aa).

A signal peptide spans 1–19; sequence MDTWLVCWAIFSLLKAGLT. An Ig-like domain is found at 21–115; sequence PEVTQTPSHQ…SAMYFCASSE (95 aa). Cysteines 42 and 111 form a disulfide. Asn-93 carries N-linked (GlcNAc...) asparagine glycosylation.

As to quaternary structure, alpha-beta TR is a heterodimer composed of an alpha and beta chain; disulfide-linked. The alpha-beta TR is associated with the transmembrane signaling CD3 coreceptor proteins to form the TR-CD3 (TcR or TCR). The assembly of alpha-beta TR heterodimers with CD3 occurs in the endoplasmic reticulum where a single alpha-beta TR heterodimer associates with one CD3D-CD3E heterodimer, one CD3G-CD3E heterodimer and one CD247 homodimer forming a stable octameric structure. CD3D-CD3E and CD3G-CD3E heterodimers preferentially associate with TR alpha and TR beta chains, respectively. The association of the CD247 homodimer is the last step of TcR assembly in the endoplasmic reticulum and is required for transport to the cell surface.

The protein resides in the cell membrane. Functionally, v region of the variable domain of T cell receptor (TR) beta chain that participates in the antigen recognition. Alpha-beta T cell receptors are antigen specific receptors which are essential to the immune response and are present on the cell surface of T lymphocytes. Recognize peptide-major histocompatibility (MH) (pMH) complexes that are displayed by antigen presenting cells (APC), a prerequisite for efficient T cell adaptive immunity against pathogens. Binding of alpha-beta TR to pMH complex initiates TR-CD3 clustering on the cell surface and intracellular activation of LCK that phosphorylates the ITAM motifs of CD3G, CD3D, CD3E and CD247 enabling the recruitment of ZAP70. In turn ZAP70 phosphorylates LAT, which recruits numerous signaling molecules to form the LAT signalosome. The LAT signalosome propagates signal branching to three major signaling pathways, the calcium, the mitogen-activated protein kinase (MAPK) kinase and the nuclear factor NF-kappa-B (NF-kB) pathways, leading to the mobilization of transcription factors that are critical for gene expression and essential for T cell growth and differentiation. The T cell repertoire is generated in the thymus, by V-(D)-J rearrangement. This repertoire is then shaped by intrathymic selection events to generate a peripheral T cell pool of self-MH restricted, non-autoaggressive T cells. Post-thymic interaction of alpha-beta TR with the pMH complexes shapes TR structural and functional avidity. This is T cell receptor beta variable 2 from Homo sapiens (Human).